We begin with the raw amino-acid sequence, 543 residues long: MALLPRLAAGGLLLLLALAALEGKPAPSALSQLLEKRSEDQAAAGRIIDGGDTKQAARDPSPQRNVEPLCSCKDMSDKECLNFCHQDVIWRDTKQAARDPSPQRNVEPLCTCNDMTDEECLNFCHQDVIWRDTKQAARDPSPQRNVEPLCSCKDMTDKECLYFCHQDVIWRDTKQAARDPSPQRNVEPLCTCNDMTDEECLNFCHQDVIWRDTKQAARDPSPQRNVEPLCTCNDMTDEECLNFCHQDVIWRDTKQAARDPSPQRNVEPLCTCKDMTDKECLYFCHQGIIWRDTKQAARDPSPQRNVEPLCSCKDMSDKECLNFCHQDVIWRDTKQAARDPSPQRNVEPLCTCNDMTDEECLNFCHQDVIWRDTKQAARDPSPQRNVEPLCTCNDMTDEECLNFCHQDVIWRDTKQAARDPSPQRNVEPLCSCKDMTDKECLYFCHQDVIWRDTKQAARDPSPQRNVEPLCSCKDMSDKECLNFCHQDVIWRDTKQAARDPSPQRNVEPLCSCKDMTDKECLNFCHQDVIWKNADTSANPEFLG.

The signal sequence occupies residues 1–23; that stretch reads MALLPRLAAGGLLLLLALAALEG. Positions 24–69 are excised as a propeptide; the sequence is KPAPSALSQLLEKRSEDQAAAGRIIDGGDTKQAARDPSPQRNVEPL. The disordered stretch occupies residues 45-65; sequence GRIIDGGDTKQAARDPSPQRN. Repeat copies occupy residues 51 to 90, 91 to 130, 131 to 170, 171 to 210, 211 to 250, 251 to 290, 291 to 330, 331 to 370, 371 to 410, 411 to 450, 451 to 490, and 491 to 530. The segment at 51 to 530 is 12 X 40 AA tandem repeats; sequence GDTKQAARDP…LNFCHQDVIW (480 aa). Intrachain disulfides connect cysteine 70/cysteine 84 and cysteine 72/cysteine 80. A propeptide spanning residues 92-109 is cleaved from the precursor; sequence DTKQAARDPSPQRNVEPL. Disulfide bonds link cysteine 110-cysteine 124 and cysteine 112-cysteine 120. Positions 132–149 are excised as a propeptide; it reads DTKQAARDPSPQRNVEPL. Intrachain disulfides connect cysteine 150–cysteine 164 and cysteine 152–cysteine 160. Positions 172 to 189 are excised as a propeptide; sequence DTKQAARDPSPQRNVEPL. Cystine bridges form between cysteine 190–cysteine 204 and cysteine 192–cysteine 200. A propeptide spanning residues 212–229 is cleaved from the precursor; sequence DTKQAARDPSPQRNVEPL. Cystine bridges form between cysteine 230/cysteine 244 and cysteine 232/cysteine 240. A propeptide spanning residues 252–269 is cleaved from the precursor; that stretch reads DTKQAARDPSPQRNVEPL. Disulfide bonds link cysteine 270–cysteine 284 and cysteine 272–cysteine 280. A propeptide spanning residues 292 to 309 is cleaved from the precursor; it reads DTKQAARDPSPQRNVEPL. 2 disulfide bridges follow: cysteine 310/cysteine 324 and cysteine 312/cysteine 320. A propeptide spanning residues 332 to 349 is cleaved from the precursor; the sequence is DTKQAARDPSPQRNVEPL. Cystine bridges form between cysteine 350/cysteine 364 and cysteine 352/cysteine 360. The propeptide occupies 372–389; the sequence is DTKQAARDPSPQRNVEPL. Cystine bridges form between cysteine 390–cysteine 404 and cysteine 392–cysteine 400. The propeptide occupies 412–429; that stretch reads DTKQAARDPSPQRNVEPL. 2 cysteine pairs are disulfide-bonded: cysteine 430-cysteine 444 and cysteine 432-cysteine 440. Residues 452-469 constitute a propeptide that is removed on maturation; it reads DTKQAARDPSPQRNVEPL. Cystine bridges form between cysteine 470/cysteine 484 and cysteine 472/cysteine 480. Residues 492–509 constitute a propeptide that is removed on maturation; sequence DTKQAARDPSPQRNVEPL. 2 disulfide bridges follow: cysteine 510-cysteine 524 and cysteine 512-cysteine 520. Residues 532–543 constitute a propeptide that is removed on maturation; sequence NADTSANPEFLG.

The protein belongs to the endothelin/sarafotoxin family. As to expression, expressed by the venom gland.

The protein resides in the secreted. Vasoconstrictor activity. These toxins cause cardiac arrest probably as a result of coronary vasospasm. Functionally, vasoconstrictor activity. Causes cardiac arrest probably as a result of coronary vasospasm. Displays high agonistic activities towards endothelin-2 receptor (EDNRB) (displays affinity in the picomolar range) and endothelin-1 receptor (EDNRA) (lower affinities). In Atractaspis engaddensis (Israeli burrowing asp), this protein is Sarafotoxin.